The primary structure comprises 395 residues: Tubulin-like protein CetZ1 (395 aa).

GTP contacts are provided by residues 10-14, 110-112, Glu-142, Asn-169, and Asn-187; these read QAGGK and GTG.

This sequence belongs to the CetZ family.

It is found in the cytoplasm. Its function is as follows. Involved in cell shape control. Essential for the development of a rod-shaped cell type required for efficient swimming. The sequence is that of Tubulin-like protein CetZ1 from Haloferax volcanii (strain ATCC 29605 / DSM 3757 / JCM 8879 / NBRC 14742 / NCIMB 2012 / VKM B-1768 / DS2) (Halobacterium volcanii).